The sequence spans 318 residues: MAVGPPDQIFKDNLTFDTFRELIIEKESTADEVADKVLEAKKALLPIRTLMTEFVGMIANLESMGNKTSQEKFLAIRMKLIELQNNIQKFSKDFQQLQPVMRTMDKFNEEVNAGEKKFFVQETLGYTQLASNGSAAGITKTSSGNDGNTTGSTANTMAMAKGLKKNAAGKPNTGTGVQSGPGRRNSTKKTGHTGPATAPTTSNSAASAAAAAANTPSLKQIPNTQPMQLMPGVSPMAMASPLNNISPQRKLTQHVNQSRENSLHQGVTPSASMITPQNILNMSAFDLNQNQTPQSLDNVNNMDLTNLDLDSLNMEFLN.

The segment covering 134 to 156 has biased composition (polar residues); the sequence is SAAGITKTSSGNDGNTTGSTANT. Residues 134–225 are disordered; that stretch reads SAAGITKTSS…PSLKQIPNTQ (92 aa). A compositionally biased stretch (low complexity) spans 192 to 217; it reads HTGPATAPTTSNSAASAAAAAANTPS.

Belongs to the Mediator complex subunit 3 family. As to quaternary structure, component of the Mediator complex.

Its subcellular location is the nucleus. Its function is as follows. Component of the Mediator complex, a coactivator involved in regulated gene transcription of nearly all RNA polymerase II-dependent genes. Mediator functions as a bridge to convey information from gene-specific regulatory proteins to the basal RNA polymerase II transcription machinery. Mediator is recruited to promoters by direct interactions with regulatory proteins and serves as a scaffold for the assembly of a functional preinitiation complex with RNA polymerase II and the general transcription factors. The polypeptide is Mediator of RNA polymerase II transcription subunit 3 (PGD1) (Kluyveromyces lactis (strain ATCC 8585 / CBS 2359 / DSM 70799 / NBRC 1267 / NRRL Y-1140 / WM37) (Yeast)).